Reading from the N-terminus, the 227-residue chain is ATP synthase F(0) complex subunit a (227 aa).

Transmembrane regions (helical) follow at residues 14 to 34 (LLGH…FPSP), 69 to 89 (WALM…LGLL), 98 to 118 (QLSM…LTGL), 139 to 159 (IPAL…ALGV), 167 to 187 (AGHL…PILP), and 190 to 210 (SILT…VAMI).

This sequence belongs to the ATPase A chain family. Component of the ATP synthase complex composed at least of ATP5F1A/subunit alpha, ATP5F1B/subunit beta, ATP5MC1/subunit c (homooctomer), MT-ATP6/subunit a, MT-ATP8/subunit 8, ATP5ME/subunit e, ATP5MF/subunit f, ATP5MG/subunit g, ATP5MK/subunit k, ATP5MJ/subunit j, ATP5F1C/subunit gamma, ATP5F1D/subunit delta, ATP5F1E/subunit epsilon, ATP5PF/subunit F6, ATP5PB/subunit b, ATP5PD/subunit d, ATP5PO/subunit OSCP. ATP synthase complex consists of a soluble F(1) head domain (subunits alpha(3) and beta(3)) - the catalytic core - and a membrane F(0) domain - the membrane proton channel (subunits c, a, 8, e, f, g, k and j). These two domains are linked by a central stalk (subunits gamma, delta, and epsilon) rotating inside the F1 region and a stationary peripheral stalk (subunits F6, b, d, and OSCP). Interacts with DNAJC30; interaction is direct.

Its subcellular location is the mitochondrion inner membrane. It catalyses the reaction H(+)(in) = H(+)(out). In terms of biological role, subunit a, of the mitochondrial membrane ATP synthase complex (F(1)F(0) ATP synthase or Complex V) that produces ATP from ADP in the presence of a proton gradient across the membrane which is generated by electron transport complexes of the respiratory chain. ATP synthase complex consist of a soluble F(1) head domain - the catalytic core - and a membrane F(1) domain - the membrane proton channel. These two domains are linked by a central stalk rotating inside the F(1) region and a stationary peripheral stalk. During catalysis, ATP synthesis in the catalytic domain of F(1) is coupled via a rotary mechanism of the central stalk subunits to proton translocation. With the subunit c (ATP5MC1), forms the proton-conducting channel in the F(0) domain, that contains two crucial half-channels (inlet and outlet) that facilitate proton movement from the mitochondrial intermembrane space (IMS) into the matrix. Protons are taken up via the inlet half-channel and released through the outlet half-channel, following a Grotthuss mechanism. The polypeptide is ATP synthase F(0) complex subunit a (Anas platyrhynchos (Mallard)).